We begin with the raw amino-acid sequence, 416 residues long: Exodeoxyribonuclease 7 large subunit (416 aa).

It belongs to the XseA family. As to quaternary structure, heterooligomer composed of large and small subunits.

The protein resides in the cytoplasm. The catalysed reaction is Exonucleolytic cleavage in either 5'- to 3'- or 3'- to 5'-direction to yield nucleoside 5'-phosphates.. Its function is as follows. Bidirectionally degrades single-stranded DNA into large acid-insoluble oligonucleotides, which are then degraded further into small acid-soluble oligonucleotides. This is Exodeoxyribonuclease 7 large subunit from Sulfurimonas denitrificans (strain ATCC 33889 / DSM 1251) (Thiomicrospira denitrificans (strain ATCC 33889 / DSM 1251)).